The sequence spans 568 residues: Urease subunit alpha (568 aa).

The 438-residue stretch at 131 to 568 (GGMDAHIHFI…LPLAQRYFLY (438 aa)) folds into the Urease domain. H136, H138, and K219 together coordinate Ni(2+). An N6-carboxylysine modification is found at K219. Position 221 (H221) interacts with substrate. 2 residues coordinate Ni(2+): H248 and H274. H322 acts as the Proton donor in catalysis. D362 contributes to the Ni(2+) binding site.

It belongs to the metallo-dependent hydrolases superfamily. Urease alpha subunit family. As to quaternary structure, heterotrimer of UreA (gamma), UreB (beta) and UreC (alpha) subunits. Three heterotrimers associate to form the active enzyme. It depends on Ni cation as a cofactor. In terms of processing, carboxylation allows a single lysine to coordinate two nickel ions.

It localises to the cytoplasm. It catalyses the reaction urea + 2 H2O + H(+) = hydrogencarbonate + 2 NH4(+). It participates in nitrogen metabolism; urea degradation; CO(2) and NH(3) from urea (urease route): step 1/1. The protein is Urease subunit alpha of Cereibacter sphaeroides (strain KD131 / KCTC 12085) (Rhodobacter sphaeroides).